Consider the following 665-residue polypeptide: MSQTSLHHARLDWNEAGTPVSSDFGDVYFSNDNGLSETRYVFLQQNGLPARFSHHNSDSFVIGETGFGTGLNFLATMKAFLEQAPQTGNGARLHFISFEKFPLTRDDLHKALTAWPELAPFSQALIAQWPLPVPGCHRLHFAGGRIRLDLWLGDIKEMLPQVPHGEQGLVDTWYLDGFAPAKNPEMWTQDLFDGLARLARPGATLSTFTSAGFVRRGLIAAGFAMKKVKGHGSKWAMLAGERVDKKPQRTIVPWYARPAGRDGEVVIIGGGIASAMTALSLVERGRKVTLLCEDHELATGASGNRQGALYPLLNGEHDALSRFYSLAFGYARQRLLSLAKHHPIAFDLCGVVQLGYDDKSTAKLAKMQQGPFPHALMRPLTPVEAEHECGLPSGHAGVSYPLGGWLCPADLTRAAIKEAQASGLLQVEYDCPVTAIHEQVDGWLVASREGRQWQAPNLVVAAGHQLPALSPFAELPLYPVRGQVSHVPTTATLSQLKTVLCYDGYLTPAHNAEHCIGASYGRNQSTQAFSAEEQAQNQARLQACLPDQAWPAEVDVSSNEARVGVRCASRDHLPVAGPIARLAGLADHYARLQRDQQNPAPLPLHPGLYVLGALGSRGLCSAPLCGELIASEICGDPLPLATDLLEALHPARYWIRKLLKGKPLN.

A tRNA (mnm(5)s(2)U34)-methyltransferase region spans residues Met1–Val243. The interval Ile268 to Asn665 is FAD-dependent cmnm(5)s(2)U34 oxidoreductase.

It in the N-terminal section; belongs to the methyltransferase superfamily. tRNA (mnm(5)s(2)U34)-methyltransferase family. The protein in the C-terminal section; belongs to the DAO family. Requires FAD as cofactor.

It localises to the cytoplasm. The enzyme catalyses 5-aminomethyl-2-thiouridine(34) in tRNA + S-adenosyl-L-methionine = 5-methylaminomethyl-2-thiouridine(34) in tRNA + S-adenosyl-L-homocysteine + H(+). Functionally, catalyzes the last two steps in the biosynthesis of 5-methylaminomethyl-2-thiouridine (mnm(5)s(2)U) at the wobble position (U34) in tRNA. Catalyzes the FAD-dependent demodification of cmnm(5)s(2)U34 to nm(5)s(2)U34, followed by the transfer of a methyl group from S-adenosyl-L-methionine to nm(5)s(2)U34, to form mnm(5)s(2)U34. This Aeromonas salmonicida (strain A449) protein is tRNA 5-methylaminomethyl-2-thiouridine biosynthesis bifunctional protein MnmC.